The chain runs to 273 residues: 3-methyl-2-oxobutanoate hydroxymethyltransferase (273 aa).

Mg(2+) contacts are provided by Asp-49 and Asp-88. Residues 49 to 50 (DS), Asp-88, and Lys-118 each bind 3-methyl-2-oxobutanoate. Mg(2+) is bound at residue Glu-120. The active-site Proton acceptor is the Glu-187.

It belongs to the PanB family. In terms of assembly, homodecamer; pentamer of dimers. Mg(2+) serves as cofactor.

It is found in the cytoplasm. It catalyses the reaction 3-methyl-2-oxobutanoate + (6R)-5,10-methylene-5,6,7,8-tetrahydrofolate + H2O = 2-dehydropantoate + (6S)-5,6,7,8-tetrahydrofolate. The protein operates within cofactor biosynthesis; (R)-pantothenate biosynthesis; (R)-pantoate from 3-methyl-2-oxobutanoate: step 1/2. Catalyzes the reversible reaction in which hydroxymethyl group from 5,10-methylenetetrahydrofolate is transferred onto alpha-ketoisovalerate to form ketopantoate. In Rhizobium etli (strain ATCC 51251 / DSM 11541 / JCM 21823 / NBRC 15573 / CFN 42), this protein is 3-methyl-2-oxobutanoate hydroxymethyltransferase.